The chain runs to 146 residues: Lysozyme-like protein 4 (146 aa).

The first 19 residues, 1–19 (MKASVVLSLLGYLVVPSGA), serve as a signal peptide directing secretion. Residues 20–146 (YILGRCTVAK…LARWLDGCKL (127 aa)) enclose the C-type lysozyme domain. 4 disulfides stabilise this stretch: Cys-25-Cys-144, Cys-49-Cys-131, Cys-84-Cys-96, and Cys-92-Cys-110. Glu-54 is a catalytic residue.

Belongs to the glycosyl hydrolase 22 family. In terms of assembly, monomer. As to expression, expressed in testis and epididymis.

The protein resides in the secreted. Its subcellular location is the cytoplasmic vesicle. It is found in the secretory vesicle. The protein localises to the acrosome. It localises to the cell projection. The protein resides in the cilium. Its subcellular location is the flagellum. In terms of biological role, may be involved in fertilization. Has no detectable bacteriolytic and lysozyme activities in vitro. The sequence is that of Lysozyme-like protein 4 (LYZL4) from Homo sapiens (Human).